Consider the following 627-residue polypeptide: tRNA uridine 5-carboxymethylaminomethyl modification enzyme MnmG (627 aa).

Residues Gly-13–Gly-18, Val-125, and Ser-180 each bind FAD. Gly-274–Phe-288 lines the NAD(+) pocket. Residue Gln-371 coordinates FAD.

It belongs to the MnmG family. Homodimer. Heterotetramer of two MnmE and two MnmG subunits. FAD serves as cofactor.

Its subcellular location is the cytoplasm. Functionally, NAD-binding protein involved in the addition of a carboxymethylaminomethyl (cmnm) group at the wobble position (U34) of certain tRNAs, forming tRNA-cmnm(5)s(2)U34. The chain is tRNA uridine 5-carboxymethylaminomethyl modification enzyme MnmG from Francisella tularensis subsp. tularensis (strain WY96-3418).